The following is a 446-amino-acid chain: White-opaque regulator 2 (446 aa).

The span at 1–24 (MTQLPSVSELINRTGSIGSSSNIT) shows a compositional bias: polar residues. Residues 1–203 (MTQLPSVSEL…QPNFPYHNNF (203 aa)) are disordered. The segment covering 30-64 (TTTSATNTTTAATATTVTSTTPRSENSYSPNSPYS) has biased composition (low complexity). Polar residues predominate over residues 67 to 86 (TRPSNTSLTNYSAGSGITVA). Low complexity-rich tracts occupy residues 87-97 (SSSFQFSQPSP) and 104-120 (STSS…QHQS). Over residues 121–144 (NPSGVSMSSNTSPRTSIVQSMSSV) the composition is skewed to polar residues. Pro residues predominate over residues 166–184 (VQPPPQQQQLQQPPPPPPQ). The span at 185 to 195 (QQQHIYPQQQP) shows a compositional bias: low complexity. Positions 305 to 332 (CLTCRKRRIKCDERKPTCFNCERSKKSC) form a DNA-binding region, zn(2)-C6 fungal-type. The disordered stretch occupies residues 336–402 (QDLSKLPPRK…SGSSTNSRNL (67 aa)). Low complexity predominate over residues 358-369 (NQQQQQQQQNQQ). Over residues 387 to 401 (HQITSISGSSTNSRN) the composition is skewed to polar residues.

It is found in the nucleus. Functionally, transcriptional regulator of the switch between 2 heritable states, the white and opaque states. These 2 cell types differ in many characteristics, including cell structure, mating competence, and virulence. Each state is heritable for many generations, and switching between states occurs stochastically, at low frequency. WOR2 is necessary for the stability of the opaque state phenotypic switching from the white to the opaque phase is a necessary step for mating. Plays a role in cell adhesion and pseudohyphal growth. The sequence is that of White-opaque regulator 2 (WOR2) from Candida albicans (strain SC5314 / ATCC MYA-2876) (Yeast).